The chain runs to 789 residues: Probable phosphoketolase (789 aa).

This sequence belongs to the XFP family. The cofactor is thiamine diphosphate.

The polypeptide is Probable phosphoketolase (Brucella abortus (strain 2308)).